The chain runs to 225 residues: Zinc finger protein 22 (225 aa).

The disordered stretch occupies residues 1-35 (MRLGKPKGGISRSSSQGKVYENQRKTGRQRQRWGM). Position 18 is an N6-acetyllysine (Lys18). 5 C2H2-type zinc fingers span residues 55-77 (YKCVECEKSFSQSSTLFQHQKIH), 83-105 (HKCADCGKSFFQSSNLIQHRRVH), 111-133 (YRCDECGERFKQSSNLIQHQRIH), 139-161 (YQCDECGRCFSQSSHLIQHQRTH), and 167-189 (YQCSECGKCFSQSSHLRQHTKVH). Positions 183 to 225 (RQHTKVHEEEKPRKTRGRSLRAKTHSLSSWKAGKGRRSAAGLR) are disordered. The segment covering 195-206 (RKTRGRSLRAKT) has biased composition (basic residues).

Belongs to the krueppel C2H2-type zinc-finger protein family.

Its subcellular location is the nucleus. Its function is as follows. Binds DNA through the consensus sequence 5'-CAATG-3'. May be involved in transcriptional regulation and may play a role in tooth formation. The polypeptide is Zinc finger protein 22 (ZNF22) (Bos taurus (Bovine)).